A 734-amino-acid chain; its full sequence is Cell surface glycoprotein gp138B (734 aa).

Residues 1–20 (MKIILTLSIFLICFLQLGQS) form the signal peptide. Residues N58, N89, N124, N198, N224, N392, N420, N435, N482, N498, N523, N596, N605, N614, N621, and N630 are each glycosylated (N-linked (GlcNAc...) asparagine). Residues 504-592 (PFIKSYGFLE…SSNEVTFYYF (89 aa)) enclose the IPT/TIG domain. A disordered region spans residues 678–712 (GETPTPSTTPSTTPSTTPSTTPSSTPTQSPGDDGS). Low complexity predominate over residues 680-712 (TPTPSTTPSTTPSTTPSTTPSSTPTQSPGDDGS). Repeat copies occupy residues 683–686 (PSTT), 687–690 (PSTT), 691–694 (PSTT), and 695–698 (PSTT). Residues 683–698 (PSTTPSTTPSTTPSTT) form a 4 X 4 AA tandem repeats of P-S-T-T region. G708 is lipidated: GPI-like-anchor amidated glycine. The propeptide at 709-734 (DDGSTSSTLSISFYLITLLLLTQQFI) is removed in mature form.

In terms of processing, the sugar chains may play important roles in cell fusion. The GPI-like-anchor contains a phosphoceramide group, rather than a phosphatidyl group.

The protein resides in the cell membrane. Involved in the sexual cell fusion of D.discoideum. This chain is Cell surface glycoprotein gp138B (GP138B), found in Dictyostelium discoideum (Social amoeba).